Reading from the N-terminus, the 275-residue chain is 2,3,4,5-tetrahydropyridine-2,6-dicarboxylate N-succinyltransferase (275 aa).

Arg108 and Asp145 together coordinate substrate.

It belongs to the transferase hexapeptide repeat family. In terms of assembly, homotrimer.

Its subcellular location is the cytoplasm. The enzyme catalyses (S)-2,3,4,5-tetrahydrodipicolinate + succinyl-CoA + H2O = (S)-2-succinylamino-6-oxoheptanedioate + CoA. Its pathway is amino-acid biosynthesis; L-lysine biosynthesis via DAP pathway; LL-2,6-diaminopimelate from (S)-tetrahydrodipicolinate (succinylase route): step 1/3. This Ruegeria pomeroyi (strain ATCC 700808 / DSM 15171 / DSS-3) (Silicibacter pomeroyi) protein is 2,3,4,5-tetrahydropyridine-2,6-dicarboxylate N-succinyltransferase.